Reading from the N-terminus, the 104-residue chain is 10 kDa heat shock protein, mitochondrial (104 aa).

Ser-81 is modified (phosphoserine).

This sequence belongs to the GroES chaperonin family. As to quaternary structure, homohexamer.

The protein resides in the mitochondrion matrix. In terms of biological role, eukaryotic CPN10 homolog which is essential for mitochondrial protein biogenesis, together with CPN60. Binds to CPN60 in the presence of Mg-ATP and suppresses the ATPase activity of the latter. The sequence is that of 10 kDa heat shock protein, mitochondrial (hsp10) from Schizosaccharomyces pombe (strain 972 / ATCC 24843) (Fission yeast).